An 82-amino-acid chain; its full sequence is RNA-binding protein Hfq (82 aa).

The Sm domain occupies 10 to 70; that stretch reads DLFLNTVRKS…ISTIMPSQPV (61 aa).

This sequence belongs to the Hfq family. As to quaternary structure, homohexamer.

Functionally, RNA chaperone that binds small regulatory RNA (sRNAs) and mRNAs to facilitate mRNA translational regulation in response to envelope stress, environmental stress and changes in metabolite concentrations. Also binds with high specificity to tRNAs. This Chelativorans sp. (strain BNC1) protein is RNA-binding protein Hfq.